The chain runs to 1165 residues: DNA-directed RNA polymerase subunit beta' (1165 aa).

Zn(2+) contacts are provided by cysteine 60, cysteine 62, cysteine 75, and cysteine 78. Mg(2+) is bound by residues aspartate 449, aspartate 451, and aspartate 453. Residues cysteine 794, cysteine 868, cysteine 875, and cysteine 878 each coordinate Zn(2+).

Belongs to the RNA polymerase beta' chain family. In terms of assembly, the RNAP catalytic core consists of 2 alpha, 1 beta, 1 beta' and 1 omega subunit. When a sigma factor is associated with the core the holoenzyme is formed, which can initiate transcription. The cofactor is Mg(2+). It depends on Zn(2+) as a cofactor.

It catalyses the reaction RNA(n) + a ribonucleoside 5'-triphosphate = RNA(n+1) + diphosphate. Functionally, DNA-dependent RNA polymerase catalyzes the transcription of DNA into RNA using the four ribonucleoside triphosphates as substrates. In Acetivibrio thermocellus (strain ATCC 27405 / DSM 1237 / JCM 9322 / NBRC 103400 / NCIMB 10682 / NRRL B-4536 / VPI 7372) (Clostridium thermocellum), this protein is DNA-directed RNA polymerase subunit beta'.